The sequence spans 603 residues: MNHFPKLLSSQIGFDVAQTILENFDRHYRIFREAAVEAKDLFERSDWHGLQRLARERITSYDDRVRECVELLEDEYDAENIDHDVWPQIKLHYIGLLTSHRQPECAETFFNSVCCKILHRAYFNNDFIFVRPAISTEYIENDEPAAKPTYRAYYPGSEGLAATLERIVTNFQLNPPFEDLERDIACIMQAIHDEFGAFDEAVNFQIHVLSSLFYRNKTAYIVGRIINGDRVLPFAVPIRHARAGVLALDTVLLRRDQLKIIFSFSHSYFLVDMNVPSAYVQFLRSIMPGKPKAEIYTSVGLQKQGKNLFYRDLLHHLSHSSDRFIIAPGIKGLVMLVFTLPSFPYVFKMIKDHFPPPKETTREQIMDKYLLVKRHDRLGRMADTLEYSSVALPLARLDDALVRELEKEVPSLIEYEGDSLVIKHLYIERRMVPLNLYLQNGSDAEIEHGVREYGNAVKELIQANIFPGDMLYKNFGVTRHGRVVFYDYDEIEYLTDCNVRRVPPPRNDEDEMSGEPWYTVGPHDIFPETYAPFLLGDPRVREHFLAHHADFFDPQLWQDSKDRLLRGELPDFFAYEPALRFCLRYPERFAPGDAAEDGKRAAA.

ATP contacts are provided by residues 327–333 and Lys348; that span reads APGIKGL. Residue Asp383 is part of the active site.

Belongs to the AceK family.

The protein resides in the cytoplasm. The enzyme catalyses L-seryl-[isocitrate dehydrogenase] + ATP = O-phospho-L-seryl-[isocitrate dehydrogenase] + ADP + H(+). Functionally, bifunctional enzyme which can phosphorylate or dephosphorylate isocitrate dehydrogenase (IDH) on a specific serine residue. This is a regulatory mechanism which enables bacteria to bypass the Krebs cycle via the glyoxylate shunt in response to the source of carbon. When bacteria are grown on glucose, IDH is fully active and unphosphorylated, but when grown on acetate or ethanol, the activity of IDH declines drastically concomitant with its phosphorylation. This Burkholderia thailandensis (strain ATCC 700388 / DSM 13276 / CCUG 48851 / CIP 106301 / E264) protein is Isocitrate dehydrogenase kinase/phosphatase.